The primary structure comprises 256 residues: uncharacterized protein (256 aa).

This is an uncharacterized protein from Escherichia coli (strain K12).